The chain runs to 471 residues: Elongation factor 1-alpha (471 aa).

The tr-type G domain maps to 10-239 (KPRLNACFIG…EALNYQDVPE (230 aa)). The interval 19–26 (GHVDSGKS) is G1. GTP is bound at residue 19-26 (GHVDSGKS). The segment at 75-79 (GITIT) is G2. Residues 96 to 99 (DCPG) form a G3 region. GTP contacts are provided by residues 96-100 (DCPGH) and 156-159 (NKMD). The interval 156 to 159 (NKMD) is G4. The G5 stretch occupies residues 196–198 (SAF).

It belongs to the TRAFAC class translation factor GTPase superfamily. Classic translation factor GTPase family. EF-Tu/EF-1A subfamily. Component of the eukaryotic elongation factor 1 complex (eEF1).

It is found in the cytoplasm. The protein operates within protein biosynthesis; polypeptide chain elongation. Functionally, GTP-binding component of the eukaryotic elongation factor 1 complex (eEF1). In its active GTP-bound form, binds to and delivers aminoacyl-tRNA to the A-site of ribosomes during protein biosynthesis. In the presence of a correct codon-anticodon match between the aminoacyl-tRNA and the A-site codon of the ribosome-bound mRNA, the ribosome acts as a GTPase activator and the GTP is hydrolyzed. The inactive GDP-bound form leaves the ribosome and must be recycled by its guanine nucleotide exchange factor (GEF) (eEF1B subcomplex) before binding another molecule of aminoacyl-tRNA. Required for nuclear export of aminoacyl-tRNAs. May also be involved in translational quality control by targeting cotranslationally damaged proteins to the proteasome. This is Elongation factor 1-alpha (TEF1) from Encephalitozoon cuniculi (strain GB-M1) (Microsporidian parasite).